Reading from the N-terminus, the 271-residue chain is Phosphatidylglycerol--prolipoprotein diacylglyceryl transferase (271 aa).

7 helical membrane passes run 21 to 41 (ISVR…MWLA), 60 to 80 (LLFA…VLFY), 95 to 115 (VWTG…AMLW), 124 to 144 (FFGV…VGRL), 176 to 196 (SQLY…NWFI), 203 to 223 (GSVS…VEYV), and 230 to 250 (LGLF…MIIG). Arg-143 is a binding site for a 1,2-diacyl-sn-glycero-3-phospho-(1'-sn-glycerol).

It belongs to the Lgt family.

The protein localises to the cell inner membrane. It catalyses the reaction L-cysteinyl-[prolipoprotein] + a 1,2-diacyl-sn-glycero-3-phospho-(1'-sn-glycerol) = an S-1,2-diacyl-sn-glyceryl-L-cysteinyl-[prolipoprotein] + sn-glycerol 1-phosphate + H(+). Its pathway is protein modification; lipoprotein biosynthesis (diacylglyceryl transfer). Catalyzes the transfer of the diacylglyceryl group from phosphatidylglycerol to the sulfhydryl group of the N-terminal cysteine of a prolipoprotein, the first step in the formation of mature lipoproteins. The sequence is that of Phosphatidylglycerol--prolipoprotein diacylglyceryl transferase from Vibrio vulnificus (strain YJ016).